A 357-amino-acid chain; its full sequence is Glutamine synthetase root isozyme 5 (357 aa).

A GS beta-grasp domain is found at 19-99 (IIAEYIWVGG…VMCDCYTPQG (81 aa)). The GS catalytic domain occupies 106–357 (KRYKAATVFS…ADTTILWKGN (252 aa)).

It belongs to the glutamine synthetase family. Homooctamer. Found mainly in the cortical tissues of seedling roots, stem and seedling shoot.

It is found in the cytoplasm. The catalysed reaction is L-glutamate + NH4(+) + ATP = L-glutamine + ADP + phosphate + H(+). Plays a role in the flow of nitrogen into nitrogenous organic compounds. The chain is Glutamine synthetase root isozyme 5 (GS1-5) from Zea mays (Maize).